Reading from the N-terminus, the 411-residue chain is Alpha-N-acetylgalactosaminidase (411 aa).

Positions 1 to 17 (MLLKTVLLLGHVAQVLM) are cleaved as a signal peptide. 2 disulfides stabilise this stretch: C38–C80 and C42–C49. 78–79 (DD) is a substrate binding site. A glycan (N-linked (GlcNAc...) asparagine) is linked at N124. C127 and C158 form a disulfide bridge. K154 provides a ligand contact to substrate. D156 (nucleophile) is an active-site residue. N177 is a glycosylation site (N-linked (GlcNAc...) asparagine). A disulfide bridge connects residues C187 and C209. Position 188 (S188) interacts with substrate. N201 carries N-linked (GlcNAc...) asparagine glycosylation. R213 and D217 together coordinate substrate. Residue D217 is the Proton donor of the active site. 2 positions are modified to phosphoserine: S322 and S332. N-linked (GlcNAc...) asparagine glycosylation is found at N359 and N385.

It belongs to the glycosyl hydrolase 27 family. Homodimer.

It localises to the lysosome. The enzyme catalyses Cleavage of non-reducing alpha-(1-&gt;3)-N-acetylgalactosamine residues from human blood group A and AB mucin glycoproteins, Forssman hapten and blood group A lacto series glycolipids.. The catalysed reaction is a neolactoside IV(3)-alpha-GalNAc,IV(2)-alpha-Fuc-nLc4Cer(d18:1(4E)) + H2O = a neolactoside IV(2)-alpha-Fuc-nLc4Cer(d18:1(4E)) + N-acetyl-alpha-D-galactosamine. It carries out the reaction a neolactoside IV(3)-alpha-GalNAc,IV(2)-alpha-Fuc-nLc4Cer(d18:0) + H2O = a neolactoside IV(2)-alpha-Fuc-nLc4Cer(d18:0) + N-acetyl-alpha-D-galactosamine. It catalyses the reaction a globoside IV3GalNAc-Gb4Cer + H2O = N-acetyl-alpha-D-galactosamine + a globoside Gb4Cer. In terms of biological role, removes terminal alpha-N-acetylgalactosamine residues from glycolipids and glycopeptides. Required for the breakdown of glycolipids. This Homo sapiens (Human) protein is Alpha-N-acetylgalactosaminidase.